The primary structure comprises 704 residues: MPRNTALEKYRNIGICAHVDAGKTTTTERILFYTGLSHKIGEVHDGAATMDWMEQEQERGITITSAATTTFWSGMDQQFEKHRINIIDTPGHVDFTIEVERSLRVLDGAVVVFCGSSGVEPQSETVWRQANKYGVPRIVFVNKMDRSGADFERVCAQIKTRLKANVVPVQLNIGAEEDFKGVIDLIRMKAIMWNEEDMGLTYELVDIPADLQDRAEELRMEMIEAAAEASEELMEKYLEGGELSEDEIHQGLRARVLNNEIVLAFCGSAFKNKGVQAVLDGVVRYLPAPNQVPAIKCETEDGEPASRPSSDDAPFAALAFKLATDPFVGNLTFIRVYSGVLKSGDAVYNPVKGKKERVGRIVQMHANKRDEIKEVRAGDIAACIGLKDVTTGDTLCDQEDVVILEKMDFPEPVISVAVEPKSKADQEKMSIALGKLAAEDPSFRVKTDEESGQTIISGMGELHLDIIVDRMRREFKVEANVGNPQVAYRETIRSKVEQEAKFVRQSGGRGQYGHVFVRFEPLDEVDENGEAKVFKFVDEVVGGVVPKEYIGSVAKGIEEQLNNGVLAGYPMIGVKATLYDGSYHDVDSSEMAFKIAGSMALKEGAKKANACILEPIMKVEVVTPEDYLGDVMGDLNRRRGIIEGMDENPSGRVINALVPLAEMFGYATNVRSISQGRASFSMEFKKYAEVPNNIADEIIKSHNS.

In terms of domain architecture, tr-type G spans 8–290 (EKYRNIGICA…GVVRYLPAPN (283 aa)). GTP contacts are provided by residues 17-24 (AHVDAGKT), 88-92 (DTPGH), and 142-145 (NKMD).

It belongs to the TRAFAC class translation factor GTPase superfamily. Classic translation factor GTPase family. EF-G/EF-2 subfamily.

The protein resides in the cytoplasm. Functionally, catalyzes the GTP-dependent ribosomal translocation step during translation elongation. During this step, the ribosome changes from the pre-translocational (PRE) to the post-translocational (POST) state as the newly formed A-site-bound peptidyl-tRNA and P-site-bound deacylated tRNA move to the P and E sites, respectively. Catalyzes the coordinated movement of the two tRNA molecules, the mRNA and conformational changes in the ribosome. In Francisella tularensis subsp. mediasiatica (strain FSC147), this protein is Elongation factor G.